The following is a 258-amino-acid chain: ProSAAS (258 aa).

The first 33 residues, Met-1–Ser-33, serve as a signal peptide directing secretion. Residues Ala-34–Pro-213 are proSAAS(1-180). Disordered regions lie at residues Pro-156–Val-188, Ser-204–Pro-230, and Arg-239–Pro-258. The segment covering Asp-177 to Val-188 has biased composition (acidic residues). The span at Ser-204 to Pro-213 shows a compositional bias: low complexity. The segment at Ser-219–Pro-258 is C-terminal inhibitory domain; interacts with PCSK1. Residues Leu-237 to Arg-242 carry the Sufficient for inhibition of PCSK1 motif.

As to quaternary structure, interacts via the C-terminal inhibitory domain with PCSK1 66 kDa form. Proteolytically cleaved in the Golgi. Little SAAS, PEN, PEN-20 and Big LEN are the major processed peptides in proSAAS-overexpressing AtT-20 pituitary corticotropic cell line. In terms of tissue distribution, expressed in brain (mostly hypothalamus and pituitary) and gut. Expressed in trigeminal ganglia and neuroendocrine cell lines. As to expression, expressed in pancreas, spinal cord and brain (most abundant in striatum, hippocampus, pons and medulla, and cortex) (at protein level).

The protein resides in the secreted. The protein localises to the golgi apparatus. It localises to the trans-Golgi network. In terms of biological role, may function in the control of the neuroendocrine secretory pathway. Proposed be a specific endogenous inhibitor of PCSK1. ProSAAS and Big PEN-LEN, both containing the C-terminal inhibitory domain, but not the processed peptides reduce PCSK1 activity in the endoplasmic reticulum and Golgi. It reduces the activity of the 87 kDa form but not the autocatalytically derived 66 kDa form of PCSK1. Subsequent processing of proSAAS may eliminate the inhibition. Slows down convertase-mediated processing of proopiomelanocortin and proenkephalin. May control the intracellular timing of PCSK1 rather than its total level of activity. Its function is as follows. Endogenous ligand for GPR171. Neuropeptide involved in the regulation of feeding. Functionally, endogenous ligand for GPR171. Neuropeptide involved in the regulation of feeding. The chain is ProSAAS (Pcsk1n) from Mus musculus (Mouse).